A 157-amino-acid chain; its full sequence is DNA gyrase inhibitor (157 aa).

It belongs to the DNA gyrase inhibitor family. In terms of assembly, interacts with DNA gyrase.

The protein resides in the cytoplasm. Its function is as follows. Inhibits the supercoiling activity of DNA gyrase. Acts by inhibiting DNA gyrase at an early step, prior to (or at the step of) binding of DNA by the gyrase. It protects cells against toxins that target DNA gyrase, by inhibiting activity of these toxins and reducing the formation of lethal double-strand breaks in the cell. The protein is DNA gyrase inhibitor of Klebsiella pneumoniae (strain 342).